The primary structure comprises 533 residues: Homeobox protein DTH-1 (533 aa).

2 disordered regions span residues 1–28 and 308–378; these read MSSNGDSVKYDTNFDREGYSTDSSNECP and LPQN…GKKR. Positions 8–19 are enriched in basic and acidic residues; the sequence is VKYDTNFDREGY. Low complexity predominate over residues 308 to 317; sequence LPQNLPNPNQ. Residues 318 to 333 are compositionally biased toward polar residues; the sequence is TDSIYSSSINENNQPI. Over residues 360–371 the composition is skewed to low complexity; the sequence is SVENNDNENSSS. A DNA-binding region (homeobox) is located at residues 377–436; it reads KRKRRVLFSKKQILELERHFRQKKYLSAPEREHLANLIGLSPTQVKIWFQNHRYKMKRAH.

This sequence belongs to the NK-2 homeobox family. In terms of tissue distribution, intestine and unidentified peripheral parenchymal cells. Slightly higher levels in the cephalic region compared to other body regions.

It is found in the nucleus. In terms of biological role, this protein might be involved in determination and/or differentiation of nerve cells in the continuous replacement of neurons in the cephalic region. The polypeptide is Homeobox protein DTH-1 (DTH-1) (Girardia tigrina (Planarian)).